The sequence spans 158 residues: MATFEGTYNDNTQALKLAIVIGRFNDLVTSKLLAGCQDCLRRHGVNTDPEGAQIDYIWVPGCFEISLVAKKLADSGKYDAIICLGAVIRGDTPHFDYVAAEVSKGVAAAAFQTGVPVIFGVLTTDTMQQALERAGIKNNLGWGYALSALEMASLMGKI.

5-amino-6-(D-ribitylamino)uracil is bound by residues Phe24, 62 to 64, and 86 to 88; these read CFE and AVI. 91–92 contributes to the (2S)-2-hydroxy-3-oxobutyl phosphate binding site; that stretch reads DT. His94 functions as the Proton donor in the catalytic mechanism. Phe119 is a 5-amino-6-(D-ribitylamino)uracil binding site. (2S)-2-hydroxy-3-oxobutyl phosphate is bound at residue Arg133.

This sequence belongs to the DMRL synthase family.

The catalysed reaction is (2S)-2-hydroxy-3-oxobutyl phosphate + 5-amino-6-(D-ribitylamino)uracil = 6,7-dimethyl-8-(1-D-ribityl)lumazine + phosphate + 2 H2O + H(+). The protein operates within cofactor biosynthesis; riboflavin biosynthesis; riboflavin from 2-hydroxy-3-oxobutyl phosphate and 5-amino-6-(D-ribitylamino)uracil: step 1/2. Its function is as follows. Catalyzes the formation of 6,7-dimethyl-8-ribityllumazine by condensation of 5-amino-6-(D-ribitylamino)uracil with 3,4-dihydroxy-2-butanone 4-phosphate. This is the penultimate step in the biosynthesis of riboflavin. The chain is 6,7-dimethyl-8-ribityllumazine synthase from Picosynechococcus sp. (strain ATCC 27264 / PCC 7002 / PR-6) (Agmenellum quadruplicatum).